The following is a 180-amino-acid chain: ADP-ribosylation factor 1 (180 aa).

The N-myristoyl glycine moiety is linked to residue G2. GTP-binding positions include G24–T31, D67–Q71, and N126–D129.

This sequence belongs to the small GTPase superfamily. Arf family.

The protein localises to the golgi apparatus. The enzyme catalyses GTP + H2O = GDP + phosphate + H(+). In terms of biological role, GTP-binding protein involved in protein trafficking; may modulate vesicle budding and uncoating within the Golgi apparatus. The polypeptide is ADP-ribosylation factor 1 (arf1) (Schizosaccharomyces pombe (strain 972 / ATCC 24843) (Fission yeast)).